The primary structure comprises 129 residues: Small ribosomal subunit protein uS11 (129 aa).

The protein belongs to the universal ribosomal protein uS11 family. As to quaternary structure, part of the 30S ribosomal subunit. Interacts with proteins S7 and S18. Binds to IF-3.

In terms of biological role, located on the platform of the 30S subunit, it bridges several disparate RNA helices of the 16S rRNA. Forms part of the Shine-Dalgarno cleft in the 70S ribosome. The chain is Small ribosomal subunit protein uS11 from Mesorhizobium japonicum (strain LMG 29417 / CECT 9101 / MAFF 303099) (Mesorhizobium loti (strain MAFF 303099)).